A 91-amino-acid polypeptide reads, in one-letter code: MHCLKAVVKGKVQGVYFRDFTRTQAIRLGLCGYAQNLESGTDVEVIAEGDKDILLEFLKLLRSGPPHAEVQEVEVSWSSTNGNYGDFHIKY.

Residues 3–91 enclose the Acylphosphatase-like domain; it reads CLKAVVKGKV…GNYGDFHIKY (89 aa). Residues arginine 18 and asparagine 36 contribute to the active site.

Belongs to the acylphosphatase family.

The catalysed reaction is an acyl phosphate + H2O = a carboxylate + phosphate + H(+). This Dehalococcoides mccartyi (strain ATCC BAA-2266 / KCTC 15142 / 195) (Dehalococcoides ethenogenes (strain 195)) protein is Acylphosphatase (acyP).